Reading from the N-terminus, the 91-residue chain is Mercuric transport protein periplasmic component (91 aa).

A signal peptide spans 1–19; it reads MKKLFASLALAAFVAPVFA. In terms of domain architecture, HMA spans 22-88; the sequence is QTVTLSVPGM…ATEDAGYPSS (67 aa). Residues C33 and C36 each contribute to the Hg(2+) site.

The protein belongs to the MerP family. Monomer.

It is found in the periplasm. Functionally, involved in mercury resistance. Acts as a mercury scavenger that specifically binds to a mercuric ion in the periplasm and probably passes it to the cytoplasmic mercuric reductase MerA via the mercuric transport protein MerT. The sequence is that of Mercuric transport protein periplasmic component from Acinetobacter calcoaceticus.